The following is a 187-amino-acid chain: MIEYIRGIIEDIGPDHVIIDLMGIGIKIFVPFSTMKELPPKGNITKLYTYLYVREDGFQIFGFKRKEELELFEKLLSVSGVGPKGALSILSVVPIESFIKAVNSGDYKILTAAPGIGKKTAERIILELKDKVPKEVVVPKEDSLLNEALEALLALGYTKSEAIYALSDVNCESVEQAVKEALKKLAK.

The segment at 1-64 (MIEYIRGIIE…EDGFQIFGFK (64 aa)) is domain I. The interval 65-136 (RKEELELFEK…ELKDKVPKEV (72 aa)) is domain II. The tract at residues 136-139 (VVVP) is flexible linker. Residues 140-187 (KEDSLLNEALEALLALGYTKSEAIYALSDVNCESVEQAVKEALKKLAK) form a domain III region.

This sequence belongs to the RuvA family. As to quaternary structure, homotetramer. Forms an RuvA(8)-RuvB(12)-Holliday junction (HJ) complex. HJ DNA is sandwiched between 2 RuvA tetramers; dsDNA enters through RuvA and exits via RuvB. An RuvB hexamer assembles on each DNA strand where it exits the tetramer. Each RuvB hexamer is contacted by two RuvA subunits (via domain III) on 2 adjacent RuvB subunits; this complex drives branch migration. In the full resolvosome a probable DNA-RuvA(4)-RuvB(12)-RuvC(2) complex forms which resolves the HJ.

It localises to the cytoplasm. The RuvA-RuvB-RuvC complex processes Holliday junction (HJ) DNA during genetic recombination and DNA repair, while the RuvA-RuvB complex plays an important role in the rescue of blocked DNA replication forks via replication fork reversal (RFR). RuvA specifically binds to HJ cruciform DNA, conferring on it an open structure. The RuvB hexamer acts as an ATP-dependent pump, pulling dsDNA into and through the RuvAB complex. HJ branch migration allows RuvC to scan DNA until it finds its consensus sequence, where it cleaves and resolves the cruciform DNA. The polypeptide is Holliday junction branch migration complex subunit RuvA (Caldanaerobacter subterraneus subsp. tengcongensis (strain DSM 15242 / JCM 11007 / NBRC 100824 / MB4) (Thermoanaerobacter tengcongensis)).